A 786-amino-acid polypeptide reads, in one-letter code: LPS-assembly protein LptD (786 aa).

The N-terminal stretch at 1–39 (MPPKPLFPNVFPGDGAPRKRRLALALLAVPGLVPAVSYA) is a signal peptide. The tract at residues 767-786 (PGYTPLPPPPPPMSRFSNYE) is disordered. Over residues 770 to 779 (TPLPPPPPPM) the composition is skewed to pro residues.

It belongs to the LptD family. In terms of assembly, component of the lipopolysaccharide transport and assembly complex. Interacts with LptE and LptA.

It localises to the cell outer membrane. Functionally, together with LptE, is involved in the assembly of lipopolysaccharide (LPS) at the surface of the outer membrane. The protein is LPS-assembly protein LptD of Burkholderia lata (strain ATCC 17760 / DSM 23089 / LMG 22485 / NCIMB 9086 / R18194 / 383).